A 232-amino-acid polypeptide reads, in one-letter code: uncharacterized protein (232 aa).

Positions 1-71 (MSNPTIEGDE…KENERIKNDD (71 aa)) are disordered. The span at 25-38 (DDLDDLDDILDDLD) shows a compositional bias: acidic residues. Residues 44–71 (KNEEKKNIDEHKQTGNTSKENERIKNDD) are compositionally biased toward basic and acidic residues.

This is an uncharacterized protein from Schizosaccharomyces pombe (strain 972 / ATCC 24843) (Fission yeast).